Consider the following 51-residue polypeptide: Sperm protamine P1 (51 aa).

This sequence belongs to the protamine P1 family. As to expression, testis.

Its subcellular location is the nucleus. It is found in the chromosome. Functionally, protamines substitute for histones in the chromatin of sperm during the haploid phase of spermatogenesis. They compact sperm DNA into a highly condensed, stable and inactive complex. The polypeptide is Sperm protamine P1 (PRM1) (Colobus guereza (Mantled guereza)).